A 372-amino-acid chain; its full sequence is Putative RING-H2 finger protein ATL21A (372 aa).

Positions 1 to 20 (MTFSKQLFLYLFFLFPLLHA) are cleaved as a signal peptide. A helical transmembrane segment spans residues 242-262 (IILLSIIGPLTIFATCIAVGV). An RING-type; atypical zinc finger spans residues 320-362 (CPICLSEYASKETVRCIPECDHCFHSECIDVWLKIHGSCPLCR).

Belongs to the RING-type zinc finger family. ATL subfamily.

The protein resides in the membrane. The enzyme catalyses S-ubiquitinyl-[E2 ubiquitin-conjugating enzyme]-L-cysteine + [acceptor protein]-L-lysine = [E2 ubiquitin-conjugating enzyme]-L-cysteine + N(6)-ubiquitinyl-[acceptor protein]-L-lysine.. It functions in the pathway protein modification; protein ubiquitination. In Arabidopsis thaliana (Mouse-ear cress), this protein is Putative RING-H2 finger protein ATL21A (ATL21A).